A 905-amino-acid polypeptide reads, in one-letter code: DNA mismatch repair protein MutS (905 aa).

Positions Glu-389 to Pro-410 are disordered. Gly-638–Ser-645 is an ATP binding site. Positions Arg-826–Pro-847 are disordered. The segment covering Gly-831 to Thr-840 has biased composition (polar residues).

Belongs to the DNA mismatch repair MutS family.

Functionally, this protein is involved in the repair of mismatches in DNA. It is possible that it carries out the mismatch recognition step. This protein has a weak ATPase activity. The polypeptide is DNA mismatch repair protein MutS (Nitratidesulfovibrio vulgaris (strain ATCC 29579 / DSM 644 / CCUG 34227 / NCIMB 8303 / VKM B-1760 / Hildenborough) (Desulfovibrio vulgaris)).